Here is a 437-residue protein sequence, read N- to C-terminus: Aspartic proteinase nepenthesin-1 (437 aa).

Positions 1–24 (MASSLYSFLLALSIVYIFVAPTHS) are cleaved as a signal peptide. The propeptide at 25 to 78 (TSRTALNHRHEAKVTGFQIMLEHVDSGKNLTKFQLLERAIERGSRRLQRLEAML) is activation peptide. N-linked (GlcNAc...) asparagine glycosylation is found at Asn-53 and Asn-98. In terms of domain architecture, Peptidase A1 spans 95 to 430 (YLMNLSIGTP…DTGNSVVSFA (336 aa)). Asp-113 is a catalytic residue. 6 disulfide bridges follow: Cys-123–Cys-126, Cys-129–Cys-203, Cys-150–Cys-168, Cys-155–Cys-163, Cys-240–Cys-434, and Cys-354–Cys-395. Asn-131 carries N-linked (GlcNAc...) asparagine glycosylation. N-linked (GlcNAc...) asparagine glycosylation is found at Asn-198, Asn-267, and Asn-307. Residue Asp-315 is part of the active site. Asn-345 carries N-linked (GlcNAc...) asparagine glycosylation.

Belongs to the peptidase A1 family.

Its subcellular location is the secreted. It carries out the reaction Similar to pepsin, but also cleaves on either side of Asp and at Lys-|-Arg.. With respect to regulation, inhibited by pepstatin and by diazoacetyl-D,L-norleucine methyl ester (DAN) in the presence of Cu(2+) ions. Its function is as follows. Extracellular proteinase found in the pitcher fluid of carnivorous plants. Digest prey for nitrogen uptake. This is Aspartic proteinase nepenthesin-1 (nep1) from Nepenthes gracilis (Slender pitcher plant).